The primary structure comprises 83 residues: uncharacterized protein (83 aa).

A helical membrane pass occupies residues 50–70 (IMVFLGEAWIILIPFAIFCII).

It belongs to the plectrovirus ORF7 family.

It localises to the host membrane. This is an uncharacterized protein from Spiroplasma melliferum (SpV1).